The primary structure comprises 820 residues: TORTIFOLIA1-like protein 2 (820 aa).

HEAT repeat units lie at residues 61-98, 102-139, 146-183, 187-224, and 228-265; these read DKVS…FHEG, PYLG…KMSC, GVFV…SSPE, AIIQ…AGGA, and SVLS…TGEK. Residues 304-321 are compositionally biased toward low complexity; the sequence is PGSDSPEPSETESSVKES. Disordered regions lie at residues 304–325, 357–377, and 584–644; these read PGSD…YNGA, PVSA…SNQD, and GSTI…GKTG. Over residues 367 to 377 the composition is skewed to basic and acidic residues; it reads YNDDPRKSNQD. Residues 584-613 are compositionally biased toward polar residues; the sequence is GSTISPRLSSCTSRTSTDIRNRQSTLSTSK.

In Arabidopsis thaliana (Mouse-ear cress), this protein is TORTIFOLIA1-like protein 2.